The following is a 143-amino-acid chain: uncharacterized protein (143 aa).

The span at 1-14 shows a compositional bias: basic and acidic residues; the sequence is MPAAKKQIEEKPEV. Positions 1–25 are disordered; sequence MPAAKKQIEEKPEVEQDLGAPDFSD.

This is an uncharacterized protein from Pseudoalteromonas phage PM2 (Bacteriophage PM2).